A 524-amino-acid polypeptide reads, in one-letter code: Na(+)/H(+) antiporter NhaB (524 aa).

The next 13 membrane-spanning stretches (helical) occupy residues 23–43, 45–65, 98–118, 136–156, 203–223, 239–259, 304–324, 325–345, 358–378, 392–412, 420–440, 448–468, and 479–499; these read LAII…SPFV, GWML…CYPL, LLLI…LFIF, CVAS…AVVI, LMMH…VGEP, FFMR…LVCI, ALIG…VGLV, GLSV…HALG, LTVF…TPII, LFYL…VGTV, AFEL…AINT, ATPN…APLI, and ALPY…YLLV.

Belongs to the NhaB Na(+)/H(+) (TC 2.A.34) antiporter family.

It localises to the cell inner membrane. The catalysed reaction is 2 Na(+)(in) + 3 H(+)(out) = 2 Na(+)(out) + 3 H(+)(in). In terms of biological role, na(+)/H(+) antiporter that extrudes sodium in exchange for external protons. The polypeptide is Na(+)/H(+) antiporter NhaB (Yersinia enterocolitica serotype O:8 / biotype 1B (strain NCTC 13174 / 8081)).